The sequence spans 693 residues: Putative transmembrane protein ORF68 (693 aa).

The first 17 residues, 1 to 17, serve as a signal peptide directing secretion; the sequence is MILTIILYTLLFSTCSA. Residues 18 to 666 lie on the Extracellular side of the membrane; that stretch reads QSVHTMPEAV…WLTKFGTGGG (649 aa). Residues 208–256 adopt a coiled-coil conformation; it reads SKAANNRMDALEDGMKNINTRVTETNLLLEKLSTEVTGALTQLENEIKM. A helical transmembrane segment spans residues 667-687; the sequence is IAGVTIGLLLPILAIVFSCYV. Topologically, residues 688 to 693 are cytoplasmic; it reads FCKRRV.

It is found in the host membrane. This Magallana gigas (Pacific oyster) protein is Putative transmembrane protein ORF68.